A 160-amino-acid chain; its full sequence is Transcription elongation factor GreA 2 (160 aa).

The stretch at methionine 9–glutamine 73 forms a coiled coil.

The protein belongs to the GreA/GreB family.

Its function is as follows. Necessary for efficient RNA polymerase transcription elongation past template-encoded arresting sites. The arresting sites in DNA have the property of trapping a certain fraction of elongating RNA polymerases that pass through, resulting in locked ternary complexes. Cleavage of the nascent transcript by cleavage factors such as GreA or GreB allows the resumption of elongation from the new 3'terminus. GreA releases sequences of 2 to 3 nucleotides. The protein is Transcription elongation factor GreA 2 of Lactiplantibacillus plantarum (strain ATCC BAA-793 / NCIMB 8826 / WCFS1) (Lactobacillus plantarum).